Consider the following 232-residue polypeptide: tRNA (guanine-N(1)-)-methyltransferase (232 aa).

S-adenosyl-L-methionine-binding positions include G114 and 134–139 (IGDYIL).

Belongs to the RNA methyltransferase TrmD family. As to quaternary structure, homodimer.

The protein resides in the cytoplasm. The catalysed reaction is guanosine(37) in tRNA + S-adenosyl-L-methionine = N(1)-methylguanosine(37) in tRNA + S-adenosyl-L-homocysteine + H(+). In terms of biological role, specifically methylates guanosine-37 in various tRNAs. In Wolbachia pipientis subsp. Culex pipiens (strain wPip), this protein is tRNA (guanine-N(1)-)-methyltransferase.